The following is a 20-amino-acid chain: Pregnancy-associated glycoprotein 71D (20 aa).

Asn4 carries N-linked (GlcNAc...) asparagine glycosylation.

The protein belongs to the peptidase A1 family. In terms of tissue distribution, chorionic epithelium (trophectoderm) and placental cotyledons.

It localises to the secreted. Its subcellular location is the extracellular space. The polypeptide is Pregnancy-associated glycoprotein 71D (Bison bonasus (European bison)).